A 255-amino-acid polypeptide reads, in one-letter code: Na(+)-translocating NADH-quinone reductase subunit C (255 aa).

A helical transmembrane segment spans residues 11–31 (LGVVVGLSLVCSIIVSTAAVG). Thr-223 bears the FMN phosphoryl threonine mark.

It belongs to the NqrC family. In terms of assembly, composed of six subunits; NqrA, NqrB, NqrC, NqrD, NqrE and NqrF. FMN is required as a cofactor.

The protein localises to the cell inner membrane. It catalyses the reaction a ubiquinone + n Na(+)(in) + NADH + H(+) = a ubiquinol + n Na(+)(out) + NAD(+). NQR complex catalyzes the reduction of ubiquinone-1 to ubiquinol by two successive reactions, coupled with the transport of Na(+) ions from the cytoplasm to the periplasm. NqrA to NqrE are probably involved in the second step, the conversion of ubisemiquinone to ubiquinol. This chain is Na(+)-translocating NADH-quinone reductase subunit C, found in Vibrio vulnificus (strain CMCP6).